The primary structure comprises 331 residues: Laforin (331 aa).

In terms of domain architecture, CBM20 spans 1 to 124 (MLFRFGVVVP…NNLVDGVYCL (124 aa)). A Phosphoserine; by AMPK modification is found at S25. Substrate-binding positions include W32, K87, 103–107 (GPHHD), D197, D235, and R241. A Tyrosine-protein phosphatase domain is found at 156–323 (HYSRILPNIW…QQDFFQKFGK (168 aa)). Residue C266 is the Phosphocysteine intermediate of the active site. A Glucan phosphatase signature motif CXAGXGR motif is present at residues 266–272 (CNAGVGR). Substrate is bound by residues 267–272 (NAGVGR) and Y304.

This sequence belongs to the protein-tyrosine phosphatase family. In terms of assembly, homodimer. Interacts with itself. Interacts with PPP1R3B, PPP1R3C, PPP1R3D, HIRIP5, and EPM2AIP1. Binds glycogen and Lafora bodies. Interacts with NHLRC1/malin (via the NHL repeats). Forms a complex with NHLRC1/malin and HSP70. Interacts with PPP1R3D; in the presence of NHLC1/malin the interaction leads to ubiquitination and autophagic degradation of PPP1R3D. Interacts (via the phosphatase domain) with MAPT/Tau; the interaction dephosphorylates MAPT. Interacts with PRDM8. Polyubiquitinated by NHLRC1/malin. In terms of processing, phosphorylation on Ser-25 by AMPK affects the phosphatase activity of the enzyme and its ability to homodimerize and interact with NHLRC1, PPP1R3C or PRKAA2. In terms of tissue distribution, widely expressed.

The protein localises to the cytoplasm. It is found in the endoplasmic reticulum membrane. The protein resides in the cell membrane. It catalyses the reaction O-phospho-L-tyrosyl-[protein] + H2O = L-tyrosyl-[protein] + phosphate. It carries out the reaction O-phospho-L-seryl-[protein] + H2O = L-seryl-[protein] + phosphate. The enzyme catalyses O-phospho-L-threonyl-[protein] + H2O = L-threonyl-[protein] + phosphate. In terms of biological role, plays an important role in preventing glycogen hyperphosphorylation and the formation of insoluble aggregates, via its activity as glycogen phosphatase, and by promoting the ubiquitination of proteins involved in glycogen metabolism via its interaction with the E3 ubiquitin ligase NHLRC1/malin. Dephosphorylates phosphotyrosine and synthetic substrates, such as para-nitrophenylphosphate (pNPP), and has low activity with phosphoserine and phosphothreonine substrates (in vitro). Has also been shown to dephosphorylate MAPT. Shows strong phosphatase activity towards complex carbohydrates in vitro, avoiding glycogen hyperphosphorylation which is associated with reduced branching and formation of insoluble aggregates. Forms a complex with NHLRC1/malin and HSP70, which suppresses the cellular toxicity of misfolded proteins by promoting their degradation through the ubiquitin-proteasome system (UPS). Acts as a scaffold protein to facilitate PPP1R3C/PTG ubiquitination by NHLRC1/malin. Also promotes proteasome-independent protein degradation through the macroautophagy pathway. The sequence is that of Laforin (Epm2a) from Rattus norvegicus (Rat).